We begin with the raw amino-acid sequence, 84 residues long: Esculentin-1SIa (84 aa).

The first 22 residues, 1-22, serve as a signal peptide directing secretion; sequence MFTLKKPLLLIVLLGIISLSLC. The propeptide at 23–36 is removed in mature form; sequence EQERAADEDEGSEI. Residues Cys78 and Cys84 are joined by a disulfide bond.

Expressed by the skin glands.

It is found in the secreted. Has antimicrobial activity against Gram-negative bacterium E.coli ATCC 8739 (MIC=6.3 ug), against Gram positive bacteria S.aureus ATCC 6538 (MIC=3.1 ug), methicillin-resistant S.aureus ATCC 43300 (MIC=25 ug) and B.subtilis ATCC 6633 (MIC=25 ug). Has no activity against fungus C.albicans ATCC 90028. The sequence is that of Esculentin-1SIa from Odorrana ishikawae (Ishikawa's frog).